A 208-amino-acid polypeptide reads, in one-letter code: 3-demethoxyubiquinol 3-hydroxylase (208 aa).

Fe cation-binding residues include glutamate 57, glutamate 87, histidine 90, glutamate 139, glutamate 171, and histidine 174.

The protein belongs to the COQ7 family. The cofactor is Fe cation.

The protein resides in the cell membrane. It catalyses the reaction a 5-methoxy-2-methyl-3-(all-trans-polyprenyl)benzene-1,4-diol + AH2 + O2 = a 3-demethylubiquinol + A + H2O. It functions in the pathway cofactor biosynthesis; ubiquinone biosynthesis. In terms of biological role, catalyzes the hydroxylation of 2-nonaprenyl-3-methyl-6-methoxy-1,4-benzoquinol during ubiquinone biosynthesis. The polypeptide is 3-demethoxyubiquinol 3-hydroxylase (Burkholderia cenocepacia (strain ATCC BAA-245 / DSM 16553 / LMG 16656 / NCTC 13227 / J2315 / CF5610) (Burkholderia cepacia (strain J2315))).